A 168-amino-acid polypeptide reads, in one-letter code: Putative insulin-like growth factor 2 antisense gene protein (168 aa).

2 disordered regions span residues 1-91 and 108-168; these read MSKR…ERSN and PLRR…RPGK. Basic residues-rich tracts occupy residues 59-70 and 159-168; these read AQRRRGSARRGA and RWRQPGRPGK.

The sequence is that of Putative insulin-like growth factor 2 antisense gene protein (IGF2-AS) from Homo sapiens (Human).